Here is a 354-residue protein sequence, read N- to C-terminus: Carbamoyl phosphate synthase arginine-specific small chain (354 aa).

Residues 1–163 are CPSase; sequence MKAYLHVASG…RTIETYGEGG (163 aa). L-glutamine is bound by residues Ser46, Gly213, and Gly215. Residues 165 to 352 form the Glutamine amidotransferase type-1 domain; it reads HLVLVDFGYK…LQTVFKGENV (188 aa). The active-site Nucleophile is Cys240. L-glutamine contacts are provided by Leu241, Gln244, Asn282, and Tyr285. Residues His325 and Glu327 contribute to the active site.

The protein belongs to the CarA family. Composed of two chains; the small (or glutamine) chain promotes the hydrolysis of glutamine to ammonia, which is used by the large (or ammonia) chain to synthesize carbamoyl phosphate. Tetramer of heterodimers (alpha,beta)4.

The enzyme catalyses hydrogencarbonate + L-glutamine + 2 ATP + H2O = carbamoyl phosphate + L-glutamate + 2 ADP + phosphate + 2 H(+). It catalyses the reaction L-glutamine + H2O = L-glutamate + NH4(+). It functions in the pathway amino-acid biosynthesis; L-arginine biosynthesis; carbamoyl phosphate from bicarbonate: step 1/1. Small subunit of the glutamine-dependent carbamoyl phosphate synthetase (CPSase). CPSase catalyzes the formation of carbamoyl phosphate from the ammonia moiety of glutamine, carbonate, and phosphate donated by ATP, constituting the first step of the biosynthetic pathway leading to arginine and/or urea. The small subunit (glutamine amidotransferase) binds and cleaves glutamine to supply the large subunit with the substrate ammonia. This Geobacillus stearothermophilus (Bacillus stearothermophilus) protein is Carbamoyl phosphate synthase arginine-specific small chain.